Here is a 986-residue protein sequence, read N- to C-terminus: Translation initiation factor IF-2 (986 aa).

The span at 49-59 (EFAKDNAKGDS) shows a compositional bias: basic and acidic residues. The segment at 49–370 (EFAKDNAKGD…KNRLAKRHEY (322 aa)) is disordered. Residues 60–112 (KPASSAQKPAAKPVQQRRPAAPSAPASTSSSAPTPAAPARQASPASAHQQAPT) show a composition bias toward low complexity. Positions 135–168 (GQHDNRENGRDNREGRENGRQSRPNDRRNNDRRN) are enriched in basic and acidic residues. The span at 170-182 (QGRPNNGQPGQHQ) shows a compositional bias: low complexity. Composition is skewed to gly residues over residues 254–286 (GRGG…GGPR) and 296–353 (GQGG…GRQG). Residues 357–366 (SKARKNRLAK) show a composition bias toward basic residues. A tr-type G domain is found at 479–651 (PRPPVVTVMG…VLLTADAELD (173 aa)). Residues 488-495 (GHVDHGKT) are G1. Residue 488–495 (GHVDHGKT) coordinates GTP. A G2 region spans residues 513 to 517 (GITQR). The tract at residues 538-541 (DTPG) is G3. GTP-binding positions include 538 to 542 (DTPGH) and 592 to 595 (NKID). The G4 stretch occupies residues 592–595 (NKID). The G5 stretch occupies residues 628–630 (SAK).

The protein belongs to the TRAFAC class translation factor GTPase superfamily. Classic translation factor GTPase family. IF-2 subfamily.

It is found in the cytoplasm. In terms of biological role, one of the essential components for the initiation of protein synthesis. Protects formylmethionyl-tRNA from spontaneous hydrolysis and promotes its binding to the 30S ribosomal subunits. Also involved in the hydrolysis of GTP during the formation of the 70S ribosomal complex. The sequence is that of Translation initiation factor IF-2 from Bifidobacterium longum subsp. infantis (strain ATCC 15697 / DSM 20088 / JCM 1222 / NCTC 11817 / S12).